A 216-amino-acid chain; its full sequence is MKQDTEMGEATNGYIGTPGTVPVSHAGNDSGMRRMRTASILMRLTAMALCVTALVTMVTDKQTHYFNFASTTIVKTAEYTNVLALKVFVYTNGVIAGYSLLQALWTIVAKSSYSTSKARLWTTFFLDQFIVYVLIGVTGAATEVAYIAEKGESDVAWPKQCNNFGRFCSQVGASVIVCFVAILTLVFLAVLSAKQLFIHERPSRTTRKDGYYTSNQ.

The disordered stretch occupies residues 1–30 (MKQDTEMGEATNGYIGTPGTVPVSHAGNDS). Residues 1 to 37 (MKQDTEMGEATNGYIGTPGTVPVSHAGNDSGMRRMRT) lie on the Cytoplasmic side of the membrane. A helical membrane pass occupies residues 38-58 (ASILMRLTAMALCVTALVTMV). Residues 59 to 86 (TDKQTHYFNFASTTIVKTAEYTNVLALK) lie on the Extracellular side of the membrane. The chain crosses the membrane as a helical span at residues 87–107 (VFVYTNGVIAGYSLLQALWTI). At 108–128 (VAKSSYSTSKARLWTTFFLDQ) the chain is on the cytoplasmic side. The helical transmembrane segment at 129–148 (FIVYVLIGVTGAATEVAYIA) threads the bilayer. Over 149 to 170 (EKGESDVAWPKQCNNFGRFCSQ) the chain is Extracellular. The chain crosses the membrane as a helical span at residues 171-191 (VGASVIVCFVAILTLVFLAVL). The Cytoplasmic segment spans residues 192 to 216 (SAKQLFIHERPSRTTRKDGYYTSNQ).

The protein belongs to the Casparian strip membrane proteins (CASP) family. As to quaternary structure, homodimer and heterodimers.

It is found in the cell membrane. The chain is CASP-like protein 2U1 from Marchantia polymorpha (Common liverwort).